The sequence spans 1091 residues: TATA element modulatory factor (1091 aa).

2 disordered regions span residues 42-86 and 100-280; these read IPYG…KPVR and FLSP…DAKS. Polar residues predominate over residues 57 to 81; that stretch reads WDTSTWGLNSTSSEPQSPPTASQAI. 4 positions are modified to phosphoserine: S73, S78, S112, and S136. Composition is skewed to low complexity over residues 111–122, 131–142, and 194–211; these read KSPVVSKPPSKS, SSLQESSSPGQS, and SENV…TTST. Position 213 is a phosphoserine (S213). Positions 217 to 234 are enriched in basic and acidic residues; it reads ETKDMALEPKEQKHEDRQ. Low complexity-rich tracts occupy residues 242 to 253 and 264 to 273; these read VSSFSSGTSTTS and ISESSASSRQ. 6 positions are modified to phosphoserine: S324, S326, S329, S334, S340, and S357. The interaction with Elongin BC complex stretch occupies residues 329 to 338; it reads SLDSRSVSEI. Positions 360-443 are disordered; the sequence is TPKTKVVEST…NQPKAPPEKE (84 aa). A compositionally biased stretch (acidic residues) spans 368–379; the sequence is STEENAEEEEGN. S411 and S540 each carry phosphoserine. Coiled-coil stretches lie at residues 443–767 and 824–894; these read EDVC…STAR and IQMS…SQLE. Residues S923 and S926 each carry the phosphoserine modification. Position 927 is a phosphothreonine (T927). At S931 the chain carries Phosphoserine. Residues 984–1090 are a coiled coil; the sequence is IENLQSQLKL…QIDELLRQRL (107 aa).

Component of the SNF/SWI transcription factor complexes. Interacts with RAB6A. Interacts with TCEB1. Interacts with STAT3 and FER. Interacts with TRNP1; may regulate TRNP1 proteasomal degradation. Post-translationally, phosphorylated by FER.

It is found in the cytoplasm. It localises to the nucleus. Its subcellular location is the golgi apparatus membrane. Functionally, potential coactivator of the androgen receptor. May play critical roles in two RAB6-dependent retrograde transport processes: one from endosomes to the Golgi and the other from the Golgi to the ER. Mediates STAT3 degradation. The chain is TATA element modulatory factor (Tmf1) from Mus musculus (Mouse).